A 274-amino-acid chain; its full sequence is Ciliary microtubule inner protein 2B (274 aa).

2 disordered regions span residues 46–89 (SPGL…SSMV) and 119–171 (TQRN…MDDR). The span at 130–155 (LPKEAKGEKDVEKDQEPKPEVEKEPE) shows a compositional bias: basic and acidic residues.

Belongs to the CIMIP2 family. Microtubule inner protein component of sperm flagellar doublet microtubules. In terms of tissue distribution, expressed in trachea multiciliated cells.

Its subcellular location is the cytoplasm. The protein resides in the cytoskeleton. It is found in the cilium axoneme. It localises to the flagellum axoneme. Microtubule inner protein (MIP) part of the dynein-decorated doublet microtubules (DMTs) in cilia axoneme, which is required for motile cilia beating. This is Ciliary microtubule inner protein 2B (CIMIP2B) from Bos taurus (Bovine).